The chain runs to 344 residues: Phosphoribosylformylglycinamidine cyclo-ligase (344 aa).

It belongs to the AIR synthase family.

Its subcellular location is the cytoplasm. It carries out the reaction 2-formamido-N(1)-(5-O-phospho-beta-D-ribosyl)acetamidine + ATP = 5-amino-1-(5-phospho-beta-D-ribosyl)imidazole + ADP + phosphate + H(+). Its pathway is purine metabolism; IMP biosynthesis via de novo pathway; 5-amino-1-(5-phospho-D-ribosyl)imidazole from N(2)-formyl-N(1)-(5-phospho-D-ribosyl)glycinamide: step 2/2. The sequence is that of Phosphoribosylformylglycinamidine cyclo-ligase from Haemophilus influenzae (strain PittEE).